The primary structure comprises 370 residues: D-alanine--D-alanine ligase (370 aa).

In terms of domain architecture, ATP-grasp spans Lys-144–Asp-352. Glu-177–Glu-232 contacts ATP. Residues Asp-306, Glu-319, and Asn-321 each contribute to the Mg(2+) site.

Belongs to the D-alanine--D-alanine ligase family. The cofactor is Mg(2+). Requires Mn(2+) as cofactor.

It localises to the cytoplasm. It carries out the reaction 2 D-alanine + ATP = D-alanyl-D-alanine + ADP + phosphate + H(+). It participates in cell wall biogenesis; peptidoglycan biosynthesis. Functionally, cell wall formation. The sequence is that of D-alanine--D-alanine ligase from Listeria innocua serovar 6a (strain ATCC BAA-680 / CLIP 11262).